Consider the following 157-residue polypeptide: Ribonuclease H (157 aa).

The RNase H type-1 domain maps to 1 to 146 (MPELFAYTDG…ADALAREGMA (146 aa)). The Mg(2+) site is built by D9, E52, D74, and D138.

Belongs to the RNase H family. In terms of assembly, monomer. Mg(2+) serves as cofactor.

The protein localises to the cytoplasm. The catalysed reaction is Endonucleolytic cleavage to 5'-phosphomonoester.. Functionally, endonuclease that specifically degrades the RNA of RNA-DNA hybrids. This is Ribonuclease H from Dinoroseobacter shibae (strain DSM 16493 / NCIMB 14021 / DFL 12).